Reading from the N-terminus, the 272-residue chain is Orotidine 5'-phosphate decarboxylase (272 aa).

The active-site Proton donor is Lys95.

Belongs to the OMP decarboxylase family. Type 2 subfamily.

It carries out the reaction orotidine 5'-phosphate + H(+) = UMP + CO2. It functions in the pathway pyrimidine metabolism; UMP biosynthesis via de novo pathway; UMP from orotate: step 2/2. This chain is Orotidine 5'-phosphate decarboxylase, found in Cupriavidus taiwanensis (strain DSM 17343 / BCRC 17206 / CCUG 44338 / CIP 107171 / LMG 19424 / R1) (Ralstonia taiwanensis (strain LMG 19424)).